A 130-amino-acid chain; its full sequence is Small ribosomal subunit protein uS11 (130 aa).

The protein belongs to the universal ribosomal protein uS11 family. As to quaternary structure, part of the 30S ribosomal subunit. Interacts with proteins S7 and S18. Binds to IF-3.

Its function is as follows. Located on the platform of the 30S subunit, it bridges several disparate RNA helices of the 16S rRNA. Forms part of the Shine-Dalgarno cleft in the 70S ribosome. The sequence is that of Small ribosomal subunit protein uS11 from Campylobacter fetus subsp. fetus (strain 82-40).